We begin with the raw amino-acid sequence, 567 residues long: Geranylgeranyl transferase type-2 subunit alpha (567 aa).

PFTA repeat units lie at residues 44 to 78 (LDES…QLET), 88 to 122 (LVKA…RLPE), 124 to 158 (NWTR…QAAV), 159 to 193 (PPAE…QLHP), 207 to 241 (VLLK…RADP), and 363 to 397 (VLQS…ALDP). A Phosphoserine modification is found at Ser98. LRR repeat units lie at residues 442–463 (EVRV…EQLL), 464–486 (LVTH…AALR), 487–508 (CLEV…TNLP), 509–530 (RLQE…QPLA), and 534–555 (RLVL…LEQL).

The protein belongs to the protein prenyltransferase subunit alpha family. Heterotrimer composed of RABGGTA, RABGGTB and CHM; within this trimer, RABGGTA and RABGGTB form the catalytic component B, while CHM (component A) mediates peptide substrate binding. The Rab GGTase dimer (RGGT) interacts with CHM (component A) prior to Rab protein binding; the association is stabilized by geranylgeranyl pyrophosphate (GGpp). The CHM:RGGT:Rab complex is destabilized by GGpp. Interacts with non-phosphorylated form of RAB8A; phosphorylation of RAB8A at 'Thr-72' disrupts this interaction.

It carries out the reaction geranylgeranyl diphosphate + L-cysteinyl-[protein] = S-geranylgeranyl-L-cysteinyl-[protein] + diphosphate. Its activity is regulated as follows. The enzymatic reaction requires the aid of a Rab escort protein (also called component A), such as CHM. In terms of biological role, catalyzes the transfer of a geranylgeranyl moiety from geranylgeranyl diphosphate to both cysteines of Rab proteins with the C-terminal sequence -XXCC, -XCXC and -CCXX, such as RAB1A, RAB3A, RAB5A and RAB7A. This is Geranylgeranyl transferase type-2 subunit alpha (RABGGTA) from Homo sapiens (Human).